The primary structure comprises 82 residues: Small ribosomal subunit protein bS20 (82 aa).

A disordered region spans residues 1-29 (MPNIKSAKKDLRRSRAAAVRNRAQRSALR). A compositionally biased stretch (low complexity) spans 16–29 (AAAVRNRAQRSALR).

It belongs to the bacterial ribosomal protein bS20 family.

Its function is as follows. Binds directly to 16S ribosomal RNA. This Gemmatimonas aurantiaca (strain DSM 14586 / JCM 11422 / NBRC 100505 / T-27) protein is Small ribosomal subunit protein bS20.